A 269-amino-acid chain; its full sequence is Tryptophan synthase alpha chain (269 aa).

Active-site proton acceptor residues include Glu-49 and Asp-60.

This sequence belongs to the TrpA family. In terms of assembly, tetramer of two alpha and two beta chains.

The catalysed reaction is (1S,2R)-1-C-(indol-3-yl)glycerol 3-phosphate + L-serine = D-glyceraldehyde 3-phosphate + L-tryptophan + H2O. It functions in the pathway amino-acid biosynthesis; L-tryptophan biosynthesis; L-tryptophan from chorismate: step 5/5. Functionally, the alpha subunit is responsible for the aldol cleavage of indoleglycerol phosphate to indole and glyceraldehyde 3-phosphate. The protein is Tryptophan synthase alpha chain of Pseudomonas entomophila (strain L48).